The chain runs to 213 residues: Uridine kinase (213 aa).

15–22 (GASASGKS) contacts ATP.

The protein belongs to the uridine kinase family.

It localises to the cytoplasm. The enzyme catalyses uridine + ATP = UMP + ADP + H(+). It catalyses the reaction cytidine + ATP = CMP + ADP + H(+). Its pathway is pyrimidine metabolism; CTP biosynthesis via salvage pathway; CTP from cytidine: step 1/3. The protein operates within pyrimidine metabolism; UMP biosynthesis via salvage pathway; UMP from uridine: step 1/1. This chain is Uridine kinase, found in Escherichia coli O157:H7.